Here is a 298-residue protein sequence, read N- to C-terminus: 4-hydroxy-tetrahydrodipicolinate synthase (298 aa).

Thr-51 contributes to the pyruvate binding site. The active-site Proton donor/acceptor is Tyr-139. Lys-167 functions as the Schiff-base intermediate with substrate in the catalytic mechanism. Position 209 (Ile-209) interacts with pyruvate.

It belongs to the DapA family. In terms of assembly, homotetramer; dimer of dimers.

The protein localises to the cytoplasm. It catalyses the reaction L-aspartate 4-semialdehyde + pyruvate = (2S,4S)-4-hydroxy-2,3,4,5-tetrahydrodipicolinate + H2O + H(+). Its pathway is amino-acid biosynthesis; L-lysine biosynthesis via DAP pathway; (S)-tetrahydrodipicolinate from L-aspartate: step 3/4. Its function is as follows. Catalyzes the condensation of (S)-aspartate-beta-semialdehyde [(S)-ASA] and pyruvate to 4-hydroxy-tetrahydrodipicolinate (HTPA). The polypeptide is 4-hydroxy-tetrahydrodipicolinate synthase (Pasteurella multocida (strain Pm70)).